The primary structure comprises 177 residues: Biotin-dependent acetyl-/propionyl-coenzyme A carboxylase epsilon subunit (177 aa).

A disordered region spans residues 1 to 112 (MGTCPCESSE…TEKPLHPHEP (112 aa)). The segment covering 18–100 (VSGTNEVSDG…SDGNETNNPA (83 aa)) has biased composition (polar residues).

Interacts with the AccA3/AccD5 biotin-dependent acyl-CoA carboxylase complex. Interacts with the AccA3/AccD6 complex. Is also part of the long-chain acyl-CoA carboxylase (LCC) complex, which is composed of AccA3, AccD4, AccD5 and AccE5. The four subunits are essential for activity, but AccD5, together with AccE5, probably plays a structural role rather than a catalytic one.

Functionally, stimulates activity of the AccA3/AccD5 biotin-dependent acyl-CoA carboxylase complex. Interacts with AccD5 and modulates its carboxylase activity for acetyl-CoA and propionyl-CoA. Inhibits activity of the AccA3/AccD6 complex. Is also required for the activity of the long-chain acyl-CoA carboxylase (LCC) complex. This is Biotin-dependent acetyl-/propionyl-coenzyme A carboxylase epsilon subunit from Mycobacterium tuberculosis (strain ATCC 25618 / H37Rv).